Reading from the N-terminus, the 431-residue chain is Histidinol dehydrogenase (431 aa).

Tyr124, Gln187, and Asn210 together coordinate NAD(+). The substrate site is built by Ser236, Gln258, and His261. Zn(2+)-binding residues include Gln258 and His261. Catalysis depends on proton acceptor residues Glu325 and His326. Residues His326, Asp359, Glu413, and His418 each contribute to the substrate site. Residue Asp359 participates in Zn(2+) binding. Residue His418 participates in Zn(2+) binding.

Belongs to the histidinol dehydrogenase family. It depends on Zn(2+) as a cofactor.

It carries out the reaction L-histidinol + 2 NAD(+) + H2O = L-histidine + 2 NADH + 3 H(+). The protein operates within amino-acid biosynthesis; L-histidine biosynthesis; L-histidine from 5-phospho-alpha-D-ribose 1-diphosphate: step 9/9. Catalyzes the sequential NAD-dependent oxidations of L-histidinol to L-histidinaldehyde and then to L-histidine. In Legionella pneumophila subsp. pneumophila (strain Philadelphia 1 / ATCC 33152 / DSM 7513), this protein is Histidinol dehydrogenase.